The chain runs to 136 residues: Protein NrdI (136 aa).

Belongs to the NrdI family.

Probably involved in ribonucleotide reductase function. The sequence is that of Protein NrdI from Salmonella paratyphi A (strain ATCC 9150 / SARB42).